The primary structure comprises 293 residues: Protease HtpX homolog (293 aa).

2 consecutive transmembrane segments (helical) span residues 4–24 and 40–60; these read VILF…TLRI and ALLM…LLIS. Position 146 (His146) interacts with Zn(2+). The active site involves Glu147. His150 is a binding site for Zn(2+). 2 consecutive transmembrane segments (helical) span residues 161-181 and 198-218; these read LIQG…GYFV and VTVI…VAWF. Glu223 is a binding site for Zn(2+).

It belongs to the peptidase M48B family. It depends on Zn(2+) as a cofactor.

It localises to the cell inner membrane. The protein is Protease HtpX homolog of Bordetella avium (strain 197N).